We begin with the raw amino-acid sequence, 145 residues long: 3-hydroxyacyl-[acyl-carrier-protein] dehydratase FabZ (145 aa).

Histidine 51 is a catalytic residue.

The protein belongs to the thioester dehydratase family. FabZ subfamily.

The protein localises to the cytoplasm. It carries out the reaction a (3R)-hydroxyacyl-[ACP] = a (2E)-enoyl-[ACP] + H2O. Functionally, involved in unsaturated fatty acids biosynthesis. Catalyzes the dehydration of short chain beta-hydroxyacyl-ACPs and long chain saturated and unsaturated beta-hydroxyacyl-ACPs. The polypeptide is 3-hydroxyacyl-[acyl-carrier-protein] dehydratase FabZ (Staphylococcus saprophyticus subsp. saprophyticus (strain ATCC 15305 / DSM 20229 / NCIMB 8711 / NCTC 7292 / S-41)).